Consider the following 308-residue polypeptide: ATP synthase gamma chain (308 aa).

This sequence belongs to the ATPase gamma chain family. F-type ATPases have 2 components, CF(1) - the catalytic core - and CF(0) - the membrane proton channel. CF(1) has five subunits: alpha(3), beta(3), gamma(1), delta(1), epsilon(1). CF(0) has three main subunits: a, b and c.

The protein resides in the cell inner membrane. Its function is as follows. Produces ATP from ADP in the presence of a proton gradient across the membrane. The gamma chain is believed to be important in regulating ATPase activity and the flow of protons through the CF(0) complex. The sequence is that of ATP synthase gamma chain from Salinibacter ruber (strain DSM 13855 / M31).